The sequence spans 199 residues: NAD(P)H dehydrogenase (quinone) (199 aa).

In terms of domain architecture, Flavodoxin-like spans 4–190 (VLVLYYSAYG…DGARFQGKRV (187 aa)). FMN contacts are provided by residues 10–15 (SAYGHM) and 78–80 (TRY). Residue Tyr12 participates in NAD(+) binding. Trp98 provides a ligand contact to substrate. FMN-binding positions include 113–119 (STATQHG) and His134. Positions 157-185 (GGAPYGMTTTADGDGSRQPSEQELDGARF) are disordered. Residues 163 to 177 (MTTTADGDGSRQPSE) show a composition bias toward polar residues.

This sequence belongs to the WrbA family. The cofactor is FMN.

The catalysed reaction is a quinone + NADH + H(+) = a quinol + NAD(+). It catalyses the reaction a quinone + NADPH + H(+) = a quinol + NADP(+). This chain is NAD(P)H dehydrogenase (quinone), found in Brucella anthropi (strain ATCC 49188 / DSM 6882 / CCUG 24695 / JCM 21032 / LMG 3331 / NBRC 15819 / NCTC 12168 / Alc 37) (Ochrobactrum anthropi).